The sequence spans 433 residues: Signal recognition particle 54 kDa protein (433 aa).

GTP-binding positions include 106–113 (GVEGSGKT), 186–190 (DTAGR), and 244–247 (TKMD).

It belongs to the GTP-binding SRP family. SRP54 subfamily. In terms of assembly, part of the signal recognition particle protein translocation system, which is composed of SRP and FtsY. Archaeal SRP consists of a 7S RNA molecule of 300 nucleotides and two protein subunits: SRP54 and SRP19.

The protein resides in the cytoplasm. The catalysed reaction is GTP + H2O = GDP + phosphate + H(+). Its function is as follows. Involved in targeting and insertion of nascent membrane proteins into the cytoplasmic membrane. Binds to the hydrophobic signal sequence of the ribosome-nascent chain (RNC) as it emerges from the ribosomes. The SRP-RNC complex is then targeted to the cytoplasmic membrane where it interacts with the SRP receptor FtsY. The protein is Signal recognition particle 54 kDa protein of Pyrobaculum islandicum (strain DSM 4184 / JCM 9189 / GEO3).